The primary structure comprises 259 residues: Polycomb group RING finger protein 1 (259 aa).

At Ala2 the chain carries N-acetylalanine. Ser3 carries the post-translational modification Phosphoserine. Lys24 is covalently cross-linked (Glycyl lysine isopeptide (Lys-Gly) (interchain with G-Cter in SUMO2)). The RING-type zinc finger occupies 47–86 (CCLCAGYFVDATTITECLHTFCKSCIVKYLQTSKYCPMCN). The tract at residues 86–247 (NIKIHETQPL…LSHWFGKPSP (162 aa)) is necessary for repressor activity. A Glycyl lysine isopeptide (Lys-Gly) (interchain with G-Cter in SUMO2) cross-link involves residue Lys88. Positions 150 to 255 (LPFSSFDHSK…SPLLLQYSVK (106 aa)) are required for the interaction with the KDM2B-SKP1 heterodimeric complex. The tract at residues 167-255 (EQLSLCLERL…SPLLLQYSVK (89 aa)) is RING-finger and WD40-associated ubiquitin-like domain (RAWUL); sufficient for interaction with BCOR and BCORL1.

In terms of assembly, interacts with BCORL1, forming heterodimers. The PCGF1-BCORL1 heterodimeric complex interacts with the KDM2B-SKP1 heterodimeric complex to form a homotetrameric polycomb repression complex 1 (PRC1.1). Component of the repressive BCOR complex containing a Polycomb group subcomplex at least composed of RYBP, RING1 and RNF2/RING2. Specifically interacts with BCOR, RING1 and RNF2/RING2. Component of a PRC1-like complex. Interacts with CBX6, CBX7 and CBX8. Interacts with DPPA4, NANOG, POU5F1 and RYBP.

The protein localises to the nucleus. In terms of biological role, component of the Polycomb group (PcG) multiprotein BCOR complex, a complex required to maintain the transcriptionally repressive state of some genes, such as BCL6 and the cyclin-dependent kinase inhibitor, CDKN1A. Transcriptional repressor that may be targeted to the DNA by BCL6; this transcription repressor activity may be related to PKC signaling pathway. Represses CDKN1A expression by binding to its promoter, and this repression is dependent on the retinoic acid response element (RARE element). Promotes cell cycle progression and enhances cell proliferation as well. May have a positive role in tumor cell growth by down-regulating CDKN1A. Component of a Polycomb group (PcG) multiprotein PRC1-like complex, a complex class required to maintain the transcriptionally repressive state of many genes, including Hox genes, throughout development. PcG PRC1 complex acts via chromatin remodeling and modification of histones; it mediates monoubiquitination of histone H2A 'Lys-119', rendering chromatin heritably changed in its expressibility. Within the PRC1-like complex, regulates RNF2 ubiquitin ligase activity. Regulates the expression of DPPA4 and NANOG in the NT2 embryonic carcinoma cells. In Bos taurus (Bovine), this protein is Polycomb group RING finger protein 1 (PCGF1).